The following is a 277-amino-acid chain: Histone-lysine N-methyltransferase set-17 (277 aa).

Residues 135-246 (FRIEESKLPN…INQELLVWYG (112 aa)) form the SET domain. Tyr-245 contributes to the S-adenosyl-L-methionine binding site.

Belongs to the class V-like SAM-binding methyltransferase superfamily. As to expression, expressed in the germline. Predominantly expressed in primary spermatocytes. Also expressed in the oocyte-producing germline of hermaphrodites.

Its subcellular location is the nucleus. It catalyses the reaction N(6)-methyl-L-lysyl(4)-[histone H3] + S-adenosyl-L-methionine = N(6),N(6)-dimethyl-L-lysyl(4)-[histone H3] + S-adenosyl-L-homocysteine + H(+). The catalysed reaction is L-lysyl(4)-[histone H3] + S-adenosyl-L-methionine = N(6)-methyl-L-lysyl(4)-[histone H3] + S-adenosyl-L-homocysteine + H(+). Its function is as follows. Histone methyltransferase that specifically mono- and di-methylates 'Lys-4' of histone H3 in vitro. Does not tri-methylate 'Lys-4' of histone H3 in vitro. Promotes spermatid development and fertility by positively regulating the transcription of spermatocyte-specific genes in primary spermatocytes. Together with spr-5, required for transgenerational fertility. The polypeptide is Histone-lysine N-methyltransferase set-17 (Caenorhabditis elegans).